The following is a 157-amino-acid chain: Phosphopantetheine adenylyltransferase (157 aa).

Ser9 is a substrate binding site. ATP-binding positions include 9-10 (SF) and His17. Residues Lys41, Leu73, and Lys87 each coordinate substrate. ATP is bound by residues 88–90 (GLR), Glu98, and 123–129 (YSYLSSS).

This sequence belongs to the bacterial CoaD family. In terms of assembly, homohexamer. Requires Mg(2+) as cofactor.

It localises to the cytoplasm. The enzyme catalyses (R)-4'-phosphopantetheine + ATP + H(+) = 3'-dephospho-CoA + diphosphate. The protein operates within cofactor biosynthesis; coenzyme A biosynthesis; CoA from (R)-pantothenate: step 4/5. Functionally, reversibly transfers an adenylyl group from ATP to 4'-phosphopantetheine, yielding dephospho-CoA (dPCoA) and pyrophosphate. The chain is Phosphopantetheine adenylyltransferase from Alkaliphilus metalliredigens (strain QYMF).